The primary structure comprises 106 residues: UPF0642 protein YBL028C (106 aa).

The segment covering Met-1–Asn-12 has biased composition (polar residues). 2 disordered regions span residues Met-1–Val-21 and Lys-52–Phe-106. Residues Asp-62–Arg-72 show a composition bias toward basic and acidic residues. The segment covering Gly-83 to Phe-106 has biased composition (basic residues).

Belongs to the UPF0642 family.

This chain is UPF0642 protein YBL028C, found in Saccharomyces cerevisiae (strain ATCC 204508 / S288c) (Baker's yeast).